The chain runs to 821 residues: Enhancer of polycomb-like protein 1 (821 aa).

The segment covering 1–12 has biased composition (polar residues); sequence MSSNGGSNTNER. Disordered regions lie at residues 1-43, 427-485, and 779-799; these read MSSN…TRFR, KAAA…QPAM, and QFLQQQQENGSPNNATMPINP. Low complexity-rich tracts occupy residues 18–39 and 449–465; these read SGSLRSNSNLSSVNGDGSDSGS and EQAAKVKSSKQKNSSSQ. Positions 786-799 are enriched in polar residues; it reads ENGSPNNATMPINP.

It belongs to the enhancer of polycomb family. As to quaternary structure, component of the NuA4 histone acetyltransferase complex.

It localises to the nucleus. Functionally, component of the NuA4 histone acetyltransferase complex which is involved in transcriptional activation of selected genes principally by acetylation of nucleosomal histone H4 and H2A. The NuA4 complex is also involved in DNA repair. Involved in gene silencing by neighboring heterochromatin, blockage of the silencing spreading along the chromosome, and required for cell cycle progression through G2/M. The sequence is that of Enhancer of polycomb-like protein 1 (EPL1) from Candida glabrata (strain ATCC 2001 / BCRC 20586 / JCM 3761 / NBRC 0622 / NRRL Y-65 / CBS 138) (Yeast).